The chain runs to 243 residues: Ribonuclease 3 (243 aa).

Residues 15–144 (NDTISKIINY…LIGAIYIDGG (130 aa)) enclose the RNase III domain. A Mg(2+)-binding site is contributed by Glu57. Residue Asp61 is part of the active site. Mg(2+) is bound by residues Asn130 and Glu133. Glu133 is a catalytic residue. Positions 169-238 (DPKTSLQEWT…AELMLEKINN (70 aa)) constitute a DRBM domain.

The protein belongs to the ribonuclease III family. Homodimer. It depends on Mg(2+) as a cofactor.

The protein localises to the cytoplasm. It catalyses the reaction Endonucleolytic cleavage to 5'-phosphomonoester.. Its function is as follows. Digests double-stranded RNA. Involved in the processing of primary rRNA transcript to yield the immediate precursors to the large and small rRNAs (23S and 16S). Processes some mRNAs, and tRNAs when they are encoded in the rRNA operon. Processes pre-crRNA and tracrRNA of type II CRISPR loci if present in the organism. The chain is Ribonuclease 3 from Wolbachia sp. subsp. Brugia malayi (strain TRS).